The sequence spans 947 residues: Protein translocase subunit SecA (947 aa).

ATP contacts are provided by residues glutamine 87, 105 to 109 (GEGKT), and aspartate 494. The interval 860–947 (TAPKPLPTQE…NRAPKSKRKR (88 aa)) is disordered. The span at 870-885 (AAARTTGTAAPTALRA) shows a compositional bias: low complexity. Basic and acidic residues-rich tracts occupy residues 903-914 (EDGKAKATRDSA) and 922-931 (ASRRERREAA).

This sequence belongs to the SecA family. Monomer and homodimer. Part of the essential Sec protein translocation apparatus which comprises SecA, SecYEG and auxiliary proteins SecDF. Other proteins may also be involved.

The protein resides in the cell membrane. Its subcellular location is the cytoplasm. It catalyses the reaction ATP + H2O + cellular proteinSide 1 = ADP + phosphate + cellular proteinSide 2.. Functionally, part of the Sec protein translocase complex. Interacts with the SecYEG preprotein conducting channel. Has a central role in coupling the hydrolysis of ATP to the transfer of proteins into and across the cell membrane, serving as an ATP-driven molecular motor driving the stepwise translocation of polypeptide chains across the membrane. The protein is Protein translocase subunit SecA of Rhodococcus erythropolis (strain PR4 / NBRC 100887).